Here is a 179-residue protein sequence, read N- to C-terminus: uncharacterized protein (179 aa).

Residues 139–172 (IEDLGKYIKSDRIEKEALREELEKILNTLVKHLE) adopt a coiled-coil conformation.

This is an uncharacterized protein from Methanocaldococcus jannaschii (strain ATCC 43067 / DSM 2661 / JAL-1 / JCM 10045 / NBRC 100440) (Methanococcus jannaschii).